We begin with the raw amino-acid sequence, 138 residues long: Basic phospholipase A2 PLA-N (138 aa).

The first 16 residues, 1 to 16 (MRTLWIMAVLLVGVEG), serve as a signal peptide directing secretion. 7 disulfides stabilise this stretch: Cys42–Cys131, Cys44–Cys60, Cys59–Cys111, Cys65–Cys138, Cys66–Cys104, Cys73–Cys97, and Cys91–Cys102. 3 residues coordinate Ca(2+): Tyr43, Gly45, and Gly47. His63 is an active-site residue. Asp64 lines the Ca(2+) pocket. Asp105 is an active-site residue.

It belongs to the phospholipase A2 family. Group II subfamily. D49 sub-subfamily. Ca(2+) is required as a cofactor. In terms of tissue distribution, expressed by the venom gland.

It localises to the secreted. It catalyses the reaction a 1,2-diacyl-sn-glycero-3-phosphocholine + H2O = a 1-acyl-sn-glycero-3-phosphocholine + a fatty acid + H(+). Its function is as follows. Snake venom phospholipase A2 (PLA2) that displays edema-inducing activities, as well as presynaptic neurotoxicity and myotoxicity. PLA2 catalyzes the calcium-dependent hydrolysis of the 2-acyl groups in 3-sn-phosphoglycerides. The protein is Basic phospholipase A2 PLA-N of Protobothrops flavoviridis (Habu).